Here is a 352-residue protein sequence, read N- to C-terminus: Elongation factor Ts (352 aa).

Positions 81–84 (TDFV) are involved in Mg(2+) ion dislocation from EF-Tu.

The protein belongs to the EF-Ts family.

The protein localises to the cytoplasm. Its function is as follows. Associates with the EF-Tu.GDP complex and induces the exchange of GDP to GTP. It remains bound to the aminoacyl-tRNA.EF-Tu.GTP complex up to the GTP hydrolysis stage on the ribosome. This Campylobacter hominis (strain ATCC BAA-381 / DSM 21671 / CCUG 45161 / LMG 19568 / NCTC 13146 / CH001A) protein is Elongation factor Ts.